Reading from the N-terminus, the 73-residue chain is Large ribosomal subunit protein uL29 (73 aa).

Belongs to the universal ribosomal protein uL29 family.

The protein is Large ribosomal subunit protein uL29 (rpmC) of Aquifex aeolicus (strain VF5).